Reading from the N-terminus, the 284-residue chain is Riboflavin transporter (284 aa).

2 consecutive EamA domains span residues 2–129 (VAAC…LIII) and 141–273 (LLPI…SLYL). Transmembrane regions (helical) follow at residues 26 to 46 (SVII…PLLV), 58 to 78 (FGLH…WIYA), 82 to 102 (VPIW…ILCA), 115 to 135 (LLTT…WSDS), 136 to 156 (YTVY…YSVM), 167 to 187 (ASIS…LWLA), 195 to 215 (ITAP…FTAL), and 247 to 267 (GWIV…ALII).

It belongs to the drug/metabolite transporter (DMT) superfamily. 10 TMS drug/metabolite exporter (DME) (TC 2.A.7.3) family.

It is found in the cell membrane. Functionally, transports riboflavin into the cell. The protein is Riboflavin transporter of Brucella anthropi (strain ATCC 49188 / DSM 6882 / CCUG 24695 / JCM 21032 / LMG 3331 / NBRC 15819 / NCTC 12168 / Alc 37) (Ochrobactrum anthropi).